A 396-amino-acid chain; its full sequence is Elongation factor Tu (396 aa).

Residues 10–206 (KPHVNVGTIG…ALDSFIPEPT (197 aa)) form the tr-type G domain. The interval 19–26 (GHVDHGKT) is G1. 19 to 26 (GHVDHGKT) is a GTP binding site. T26 is a Mg(2+) binding site. The tract at residues 60 to 64 (GITIS) is G2. A G3 region spans residues 81–84 (DCPG). GTP contacts are provided by residues 81–85 (DCPGH) and 136–139 (NKAD). Residues 136-139 (NKAD) form a G4 region. Positions 174 to 176 (SAR) are G5.

This sequence belongs to the TRAFAC class translation factor GTPase superfamily. Classic translation factor GTPase family. EF-Tu/EF-1A subfamily. In terms of assembly, monomer.

It localises to the cytoplasm. It catalyses the reaction GTP + H2O = GDP + phosphate + H(+). GTP hydrolase that promotes the GTP-dependent binding of aminoacyl-tRNA to the A-site of ribosomes during protein biosynthesis. The sequence is that of Elongation factor Tu from Xanthomonas euvesicatoria pv. vesicatoria (strain 85-10) (Xanthomonas campestris pv. vesicatoria).